Reading from the N-terminus, the 185-residue chain is Ribosome-recycling factor (185 aa).

It belongs to the RRF family.

The protein resides in the cytoplasm. In terms of biological role, responsible for the release of ribosomes from messenger RNA at the termination of protein biosynthesis. May increase the efficiency of translation by recycling ribosomes from one round of translation to another. This Pseudomonas entomophila (strain L48) protein is Ribosome-recycling factor.